A 306-amino-acid chain; its full sequence is Mitochondrial basic amino acids transporter (306 aa).

6 helical membrane-spanning segments follow: residues 2–22 (ALDF…GHPF), 61–81 (GLGS…GVQG), 96–116 (FLAG…MELA), 153–172 (GMVS…FLTY), 187–207 (LLVP…WLST), and 255–275 (LLRA…VLTY). Solcar repeat units follow at residues 2–86 (ALDF…TLRA), 90–178 (DSPL…LTRA), and 190–275 (PKLL…VLTY). The tract at residues 283–306 (VDSEAAPGASTTPAGPALAQPSSL) is disordered. Over residues 287–306 (AAPGASTTPAGPALAQPSSL) the composition is skewed to low complexity.

Belongs to the mitochondrial carrier (TC 2.A.29) family.

It is found in the mitochondrion inner membrane. It carries out the reaction L-lysine(out) + L-arginine(in) = L-lysine(in) + L-arginine(out). The enzyme catalyses L-histidine(out) + L-arginine(in) = L-histidine(in) + L-arginine(out). The catalysed reaction is L-ornithine(in) + L-arginine(out) = L-ornithine(out) + L-arginine(in). It catalyses the reaction L-homoarginine(in) + L-arginine(out) = L-homoarginine(out) + L-arginine(in). It carries out the reaction N(omega)-methyl-L-arginine(in) + L-arginine(out) = N(omega)-methyl-L-arginine(out) + L-arginine(in). The enzyme catalyses L-arginine(in) = L-arginine(out). The catalysed reaction is L-lysine(in) = L-lysine(out). It catalyses the reaction L-ornithine(in) = L-ornithine(out). It carries out the reaction L-histidine(out) = L-histidine(in). Mitochondrial transporter of arginine, lysine, homoarginine, methylarginine and, to a much lesser extent, ornithine and histidine. Does not transport carnitine nor acylcarnitines. Functions by both counter-exchange and uniport mechanisms. Plays a physiological role in the import of basic amino acids into mitochondria for mitochondrial protein synthesis and amino acid degradation. The polypeptide is Mitochondrial basic amino acids transporter (Slc25a29) (Rattus norvegicus (Rat)).